The primary structure comprises 315 residues: WD repeat domain-containing protein 83 (315 aa).

WD repeat units follow at residues 23-62, 65-104, 107-146, 151-188, 190-228, 231-272, and 275-313; these read CGQGAVRAVRFNVDGNYCLTCGSDKTLKLWNPLRGTLLRT, GHGYEVLDAAGSFDNSHLCSGGGDKTVVLWDVATGQVVRK, GHAGKVNTVQFNEEATVILSGSIDSSVRCWDCRSRKPEPV, EARDGISSVKVSDHEILAGSVDGRVRRYDLRMGQVTSD, VGSPITCTCFSRDGQCTLISSLDSTLRLLDKDTGELLGE, GHKN…LALA, and VGSNVVQSLAYHPADPCLLTAMGGSIQYWREETYEAEGG.

The protein belongs to the WD repeat MORG1 family. In terms of assembly, interacts with EGLN3/PHD3. Interacts with ERK signaling proteins MAP2K1/MEK1, MAP2K2/MEK2, LAMTOR3, ARAF/Raf-1, MAPK1/ERK2 and MAPK3/ERK1. Identified in the spliceosome C complex. Interacts with PARD6B and CRB3. Interacts strongly with GTP-bound RRAGA but not with inactive GDP-bound. Interacts with p62/SQSTM1. Highly expressed in testis and brain. Expressed at intermediate level in heart, liver and kidney. Weakly expressed in spleen and lung and absent in muscle.

The protein localises to the cytoplasm. It is found in the lysosome. Its subcellular location is the nucleus. Its function is as follows. Molecular scaffold protein for various multimeric protein complexes. Acts as a module in the assembly of a multicomponent scaffold for the ERK pathway, linking ERK responses to specific agonists. At low concentrations it enhances ERK activation, whereas high concentrations lead to the inhibition of ERK activation. Also involved in response to hypoxia by acting as a negative regulator of HIF1A/HIF-1-alpha via its interaction with EGLN3/PHD3. May promote degradation of HIF1A. May act by recruiting signaling complexes to a specific upstream activator. May also be involved in pre-mRNA splicing. Participates in tight junction development by regulating apico-basal polarity, a key step in tissue development and organization. Mechanistically, regulates the translocation of PAR6-aPKC from the cytoplasm to the apical surface by acting as an adapter between PARD6B AND CRB3. Also acts as a negative regulator of mTORC1 under nutrient-rich conditions by binding to the active Rag GTPases to inhibit mTORC1 localization to the lysosome and phosphorylation of downstream targets. This facilitates constitutive basal autophagy during nutrient availability. This is WD repeat domain-containing protein 83 (Wdr83) from Rattus norvegicus (Rat).